A 179-amino-acid polypeptide reads, in one-letter code: Large ribosomal subunit protein uL6 (179 aa).

Belongs to the universal ribosomal protein uL6 family. Part of the 50S ribosomal subunit.

In terms of biological role, this protein binds to the 23S rRNA, and is important in its secondary structure. It is located near the subunit interface in the base of the L7/L12 stalk, and near the tRNA binding site of the peptidyltransferase center. The polypeptide is Large ribosomal subunit protein uL6 (Solidesulfovibrio magneticus (strain ATCC 700980 / DSM 13731 / RS-1) (Desulfovibrio magneticus)).